We begin with the raw amino-acid sequence, 177 residues long: Isopentenyl-diphosphate Delta-isomerase (177 aa).

Mn(2+) is bound by residues His-22 and His-28. Positions 26 to 160 (LRHMAISVFV…PERFTPWLRI (135 aa)) constitute a Nudix hydrolase domain. Cys-62 is an active-site residue. Position 64 (His-64) interacts with Mn(2+). Glu-82 contributes to the Mg(2+) binding site. Residues Glu-108 and Glu-110 each coordinate Mn(2+). The active site involves Glu-110.

The protein belongs to the IPP isomerase type 1 family. Mg(2+) is required as a cofactor. Requires Mn(2+) as cofactor.

The protein localises to the cytoplasm. The catalysed reaction is isopentenyl diphosphate = dimethylallyl diphosphate. The protein operates within isoprenoid biosynthesis; dimethylallyl diphosphate biosynthesis; dimethylallyl diphosphate from isopentenyl diphosphate: step 1/1. It participates in porphyrin-containing compound metabolism; chlorophyll biosynthesis. Catalyzes the 1,3-allylic rearrangement of the homoallylic substrate isopentenyl (IPP) to its highly electrophilic allylic isomer, dimethylallyl diphosphate (DMAPP). In Cereibacter sphaeroides (strain KD131 / KCTC 12085) (Rhodobacter sphaeroides), this protein is Isopentenyl-diphosphate Delta-isomerase.